The chain runs to 300 residues: Acetylglutamate kinase (300 aa).

Residues 68–69 (GG), arginine 90, and asparagine 194 contribute to the substrate site.

Belongs to the acetylglutamate kinase family. ArgB subfamily.

It localises to the cytoplasm. The enzyme catalyses N-acetyl-L-glutamate + ATP = N-acetyl-L-glutamyl 5-phosphate + ADP. It functions in the pathway amino-acid biosynthesis; L-arginine biosynthesis; N(2)-acetyl-L-ornithine from L-glutamate: step 2/4. In terms of biological role, catalyzes the ATP-dependent phosphorylation of N-acetyl-L-glutamate. The chain is Acetylglutamate kinase from Methanocella arvoryzae (strain DSM 22066 / NBRC 105507 / MRE50).